The chain runs to 170 residues: Acetolactate synthase small subunit (170 aa).

Positions 9-83 constitute an ACT domain; sequence TLSVLVEDKP…NVIKIVEQEE (75 aa). An Isoglutamyl lysine isopeptide (Lys-Gln) (interchain with Q-Cter in protein Pup) cross-link involves residue Lys-46.

This sequence belongs to the acetolactate synthase small subunit family. As to quaternary structure, dimer of large and small chains.

It catalyses the reaction 2 pyruvate + H(+) = (2S)-2-acetolactate + CO2. Its pathway is amino-acid biosynthesis; L-isoleucine biosynthesis; L-isoleucine from 2-oxobutanoate: step 1/4. The protein operates within amino-acid biosynthesis; L-valine biosynthesis; L-valine from pyruvate: step 1/4. The sequence is that of Acetolactate synthase small subunit (ilvH) from Mycolicibacterium smegmatis (strain ATCC 700084 / mc(2)155) (Mycobacterium smegmatis).